A 511-amino-acid chain; its full sequence is Glycerol kinase (511 aa).

T11 provides a ligand contact to ADP. Residues T11, S12, and S13 each coordinate ATP. T11 provides a ligand contact to sn-glycerol 3-phosphate. An ADP-binding site is contributed by R15. 4 residues coordinate sn-glycerol 3-phosphate: R81, E82, Y133, and D242. Residues R81, E82, Y133, D242, and Q243 each coordinate glycerol. Residues T264 and G321 each coordinate ADP. Residues T264, G321, Q325, and G426 each coordinate ATP. Residues G426 and N430 each contribute to the ADP site.

The protein belongs to the FGGY kinase family.

It carries out the reaction glycerol + ATP = sn-glycerol 3-phosphate + ADP + H(+). It functions in the pathway polyol metabolism; glycerol degradation via glycerol kinase pathway; sn-glycerol 3-phosphate from glycerol: step 1/1. Inhibited by fructose 1,6-bisphosphate (FBP). Its function is as follows. Key enzyme in the regulation of glycerol uptake and metabolism. Catalyzes the phosphorylation of glycerol to yield sn-glycerol 3-phosphate. The chain is Glycerol kinase from Verminephrobacter eiseniae (strain EF01-2).